Reading from the N-terminus, the 253-residue chain is MRAGVFDSGVGGLTVVKSLLEHGLFDEIIYFGDTARVPYGPKDKNTIIRYSLEAQEFFKNFDVDILITACNSVSAHAIEELRSNASFPVIGVIEPGVLALQNRGLDPKSQILVIGTQATIGSGKYQKLLREHGYNNILAKATPLFVPIVEEEIFEGPVLEATLQHYFDSLHPDAIILGCTHFPLIQDAIADYFNNEAVLIHSGEAIVEHLQKELGIKARKKTPSLKLFASENPEKLKKIAAHWLRDAFKTNEL.

Residues 7 to 8 (DS) and 39 to 40 (YG) contribute to the substrate site. Cys-70 (proton donor/acceptor) is an active-site residue. 71–72 (NS) is a binding site for substrate. Cys-179 acts as the Proton donor/acceptor in catalysis. 180–181 (TH) is a substrate binding site.

This sequence belongs to the aspartate/glutamate racemases family.

The catalysed reaction is L-glutamate = D-glutamate. Its pathway is cell wall biogenesis; peptidoglycan biosynthesis. Functionally, provides the (R)-glutamate required for cell wall biosynthesis. This is Glutamate racemase from Nitratiruptor sp. (strain SB155-2).